We begin with the raw amino-acid sequence, 348 residues long: 3-isopropylmalate dehydrogenase (348 aa).

Residue 76–87 (GPKWTDPNNRPE) participates in NAD(+) binding. Residues R94, R104, R132, and D217 each coordinate substrate. Mg(2+)-binding residues include D217, D241, and D245. An NAD(+)-binding site is contributed by 275 to 287 (GSAPDIAGKNVAN).

It belongs to the isocitrate and isopropylmalate dehydrogenases family. LeuB type 1 subfamily. In terms of assembly, homodimer. The cofactor is Mg(2+). It depends on Mn(2+) as a cofactor.

The protein localises to the cytoplasm. The catalysed reaction is (2R,3S)-3-isopropylmalate + NAD(+) = 4-methyl-2-oxopentanoate + CO2 + NADH. The protein operates within amino-acid biosynthesis; L-leucine biosynthesis; L-leucine from 3-methyl-2-oxobutanoate: step 3/4. In terms of biological role, catalyzes the oxidation of 3-carboxy-2-hydroxy-4-methylpentanoate (3-isopropylmalate) to 3-carboxy-4-methyl-2-oxopentanoate. The product decarboxylates to 4-methyl-2 oxopentanoate. The sequence is that of 3-isopropylmalate dehydrogenase from Staphylococcus aureus (strain COL).